The following is a 388-amino-acid chain: 1-deoxy-D-xylulose 5-phosphate reductoisomerase (388 aa).

7 residues coordinate NADPH: Thr10, Gly11, Thr12, Ile13, Arg37, Gln38, and Asn122. Lys123 is a binding site for 1-deoxy-D-xylulose 5-phosphate. Glu124 serves as a coordination point for NADPH. Asp148 is a binding site for Mn(2+). 1-deoxy-D-xylulose 5-phosphate contacts are provided by Ser149, Glu150, Ser179, and His202. Position 150 (Glu150) interacts with Mn(2+). Residue Gly208 participates in NADPH binding. Residues Ser215, Asn220, Lys221, and Glu224 each contribute to the 1-deoxy-D-xylulose 5-phosphate site. Mn(2+) is bound at residue Glu224.

Belongs to the DXR family. It depends on Mg(2+) as a cofactor. Mn(2+) is required as a cofactor.

The catalysed reaction is 2-C-methyl-D-erythritol 4-phosphate + NADP(+) = 1-deoxy-D-xylulose 5-phosphate + NADPH + H(+). It participates in isoprenoid biosynthesis; isopentenyl diphosphate biosynthesis via DXP pathway; isopentenyl diphosphate from 1-deoxy-D-xylulose 5-phosphate: step 1/6. Functionally, catalyzes the NADPH-dependent rearrangement and reduction of 1-deoxy-D-xylulose-5-phosphate (DXP) to 2-C-methyl-D-erythritol 4-phosphate (MEP). The protein is 1-deoxy-D-xylulose 5-phosphate reductoisomerase of Laribacter hongkongensis (strain HLHK9).